The chain runs to 153 residues: uncharacterized protein (153 aa).

It localises to the mitochondrion. This is an uncharacterized protein from Arabidopsis thaliana (Mouse-ear cress).